Consider the following 156-residue polypeptide: Putative pre-16S rRNA nuclease (156 aa).

The protein belongs to the YqgF nuclease family.

The protein resides in the cytoplasm. Functionally, could be a nuclease involved in processing of the 5'-end of pre-16S rRNA. This chain is Putative pre-16S rRNA nuclease, found in Gloeobacter violaceus (strain ATCC 29082 / PCC 7421).